We begin with the raw amino-acid sequence, 396 residues long: E3 ubiquitin-protein transferase MAEA (396 aa).

An extracellular and involved in cell to cell contact region spans residues 1-124 (MAVQESAAQL…AAASVWKRKR (124 aa)). Thr28 bears the Phosphothreonine mark. Residues 121-153 (KRKRMDRMMVEHLLRCGYYNTAVKLARQSGIED) enclose the LisH domain. The 58-residue stretch at 159 to 216 (MFLTAKEVEESLERRETATCLAWCHDNKSRLRKMKSCLEFSLRIQEFIELIRQNKRLD) folds into the CTLH domain. The RING-Gid-type zinc-finger motif lies at 314–381 (CPVCSRSLNK…QDDKVVCPRT (68 aa)).

In terms of assembly, identified in the CTLH complex that contains GID4, RANBP9 and/or RANBP10, MKLN1, MAEA, RMND5A (or alternatively its paralog RMND5B), GID8, ARMC8, WDR26 and YPEL5. Within this complex, MAEA, RMND5A (or alternatively its paralog RMND5B), GID8, WDR26, and RANBP9 and/or RANBP10 form the catalytic core, while GID4, MKLN1, ARMC8 and YPEL5 have ancillary roles. Interacts with F-actin. Autoubiquitinated as component of the CTLH E3 ubiquitin-protein ligase complex (in vitro).

It localises to the cytoplasm. Its subcellular location is the nucleus. It is found in the nucleoplasm. The protein resides in the nucleus matrix. The protein localises to the cell membrane. It localises to the cytoskeleton. It catalyses the reaction S-ubiquitinyl-[E2 ubiquitin-conjugating enzyme]-L-cysteine + [acceptor protein]-L-lysine = [E2 ubiquitin-conjugating enzyme]-L-cysteine + N(6)-ubiquitinyl-[acceptor protein]-L-lysine.. Its function is as follows. Core component of the CTLH E3 ubiquitin-protein ligase complex that selectively accepts ubiquitin from UBE2H and mediates ubiquitination and subsequent proteasomal degradation of the transcription factor HBP1. MAEA and RMND5A are both required for catalytic activity of the CTLH E3 ubiquitin-protein ligase complex. MAEA is required for normal cell proliferation. The CTLH E3 ubiquitin-protein ligase complex is not required for the degradation of enzymes involved in gluconeogenesis, such as FBP1. Plays a role in erythroblast enucleation during erythrocyte maturation and in the development of mature macrophages. Mediates the attachment of erythroid cell to mature macrophages; this MAEA-mediated contact inhibits erythroid cell apoptosis. Participates in erythroblastic island formation, which is the functional unit of definitive erythropoiesis. Associates with F-actin to regulate actin distribution in erythroblasts and macrophages. May contribute to nuclear architecture and cells division events. This is E3 ubiquitin-protein transferase MAEA (MAEA) from Pongo abelii (Sumatran orangutan).